The chain runs to 315 residues: Ribosomal RNA small subunit methyltransferase H (315 aa).

S-adenosyl-L-methionine-binding positions include 33–35 (GGH), Asp-52, Phe-84, Asp-106, and Gln-113. The disordered stretch occupies residues 294–315 (SSDELEENNRSHSAKLRVAEKL).

Belongs to the methyltransferase superfamily. RsmH family.

It localises to the cytoplasm. It catalyses the reaction cytidine(1402) in 16S rRNA + S-adenosyl-L-methionine = N(4)-methylcytidine(1402) in 16S rRNA + S-adenosyl-L-homocysteine + H(+). Specifically methylates the N4 position of cytidine in position 1402 (C1402) of 16S rRNA. This is Ribosomal RNA small subunit methyltransferase H from Lactobacillus johnsonii (strain CNCM I-12250 / La1 / NCC 533).